The chain runs to 213 residues: Carboxysome shell protein CcmP (213 aa).

BMC circularly permuted domains lie at 4-106 (ELRS…RLKP) and 107-211 (KIVS…GDRS). A Probably important for pore gating motif is present at residues 69–70 (ER).

It belongs to the EutL/PduB family. In terms of assembly, a dimer of stacked trimers, the same faces interact.

It is found in the carboxysome. Functionally, probably part of the carboxysome shell, a polyhedral inclusion where RuBisCO (ribulose bisphosphate carboxylase, rbcL-rbcS) is sequestered. It is thought that this protein controls transport of RuBisCO reactants in and out of the carboxysome; residual densities in the 4 X-ray structures suggest that differing compounds bind in interior pockets, depending on the open or closed state of the pore. The chain is Carboxysome shell protein CcmP from Synechococcus elongatus (strain ATCC 33912 / PCC 7942 / FACHB-805) (Anacystis nidulans R2).